The chain runs to 273 residues: Glutamate 5-kinase (273 aa).

K15 is a binding site for ATP. Residues S55, D142, and N158 each contribute to the substrate site. ATP contacts are provided by residues 178–179 (SD) and 220–226 (TGGMLSK).

Belongs to the glutamate 5-kinase family.

Its subcellular location is the cytoplasm. The enzyme catalyses L-glutamate + ATP = L-glutamyl 5-phosphate + ADP. Its pathway is amino-acid biosynthesis; L-proline biosynthesis; L-glutamate 5-semialdehyde from L-glutamate: step 1/2. Catalyzes the transfer of a phosphate group to glutamate to form L-glutamate 5-phosphate. This Streptococcus pyogenes serotype M49 (strain NZ131) protein is Glutamate 5-kinase.